Here is an 892-residue protein sequence, read N- to C-terminus: Zinc finger protein 512B (892 aa).

The disordered stretch occupies residues M1–Q82. The segment covering G8–G19 has biased composition (low complexity). The C2H2-type 1; atypical zinc-finger motif lies at V105 to C129. A C2H2-type 2 zinc finger spans residues F140–H163. Disordered regions lie at residues M323 to V473 and E562 to E582. The span at S371–T384 shows a compositional bias: polar residues. Positions S385 to G398 are enriched in low complexity. Phosphoserine is present on S409. Positions T418–K428 are enriched in basic residues. Residues R421–P427 carry the NuRD interaction motif motif. The segment at L540–H563 adopts a C2H2-type 3 zinc-finger fold. The segment at L594–C618 adopts a C2H2-type 4; atypical zinc-finger fold. The C2H2-type 5 zinc-finger motif lies at F630–H653. Residues V649–V682 form a disordered region. Phosphoserine is present on S686. The C2H2-type 6; atypical zinc-finger motif lies at V750–C774. A C2H2-type 7 zinc finger spans residues Y784 to H807. The disordered stretch occupies residues F812–K892. Residues P819–K831 show a composition bias toward basic and acidic residues. Basic residues predominate over residues K832–K849. The segment covering E850–A876 has biased composition (basic and acidic residues).

Belongs to the krueppel C2H2-type zinc-finger protein family. As to quaternary structure, interacts (via its NuRD interaction motif) with RBBP4 of the nucleosome remodeling and deacetylase (NuRD) complex; the interaction is direct and may play a role in repressing gene expression.

The protein localises to the nucleus. Its function is as follows. Involved in transcriptional regulation by repressing gene expression. Associates with the nucleosome remodeling and histone deacetylase (NuRD) complex, which promotes transcriptional repression by histone deacetylation and nucleosome remodeling. This Homo sapiens (Human) protein is Zinc finger protein 512B (ZNF512B).